The sequence spans 101 residues: CRISPR-associated endoribonuclease Cas2 (101 aa).

Position 8 (aspartate 8) interacts with Mg(2+).

It belongs to the CRISPR-associated endoribonuclease Cas2 protein family. As to quaternary structure, homodimer, forms a heterotetramer with a Cas1 homodimer. The cofactor is Mg(2+).

Functionally, CRISPR (clustered regularly interspaced short palindromic repeat), is an adaptive immune system that provides protection against mobile genetic elements (viruses, transposable elements and conjugative plasmids). CRISPR clusters contain sequences complementary to antecedent mobile elements and target invading nucleic acids. CRISPR clusters are transcribed and processed into CRISPR RNA (crRNA). Functions as a ssRNA-specific endoribonuclease. Involved in the integration of spacer DNA into the CRISPR cassette. This Ligilactobacillus salivarius (strain UCC118) (Lactobacillus salivarius) protein is CRISPR-associated endoribonuclease Cas2.